The sequence spans 349 residues: CCN family member 2 (349 aa).

Positions 1-26 (MSATGLGPVRCAFVLLLALCSRPASS) are cleaved as a signal peptide. Residues 27-98 (QDCSAPCQCP…NRKIGVCTAK (72 aa)) form the IGFBP N-terminal domain. 6 disulfides stabilise this stretch: cysteine 29/cysteine 54, cysteine 33/cysteine 56, cysteine 35/cysteine 57, cysteine 43/cysteine 60, cysteine 68/cysteine 82, and cysteine 74/cysteine 95. The VWFC domain maps to 101–167 (APCVFGGTVY…GKCCEEWVCD (67 aa)). One can recognise a TSP type-1 domain in the interval 198–243 (NCLVQTTEWSACSKTCGMGISTRVTNDNAFCRLEKQSRLCMVRPCE). Residues 247 to 349 (EENIKKGKKC…YYRKMYGDMA (103 aa)) form a heparin-binding region. Disulfide bonds link cysteine 256/cysteine 293, cysteine 273/cysteine 307, cysteine 284/cysteine 323, cysteine 287/cysteine 325, and cysteine 292/cysteine 329. The CTCK domain occupies 256–330 (CIRTPKISKP…KTCACHYNCP (75 aa)).

It belongs to the CCN family. Monomer. Interacts with TSKU.

The protein resides in the secreted. It is found in the extracellular space. It localises to the extracellular matrix. Its function is as follows. Major connective tissue mitoattractant secreted by vascular endothelial cells. Promotes proliferation and differentiation of chondrocytes. Is involved in the stimulation of osteoblast differentiation and has a critical role in osteogenesis. Mediates heparin- and divalent cation-dependent cell adhesion in many cell types including fibroblasts, myofibroblasts, endothelial and epithelial cells. Enhances fibroblast growth factor-induced DNA synthesis. This is CCN family member 2 (CCN2) from Bos taurus (Bovine).